The following is a 320-amino-acid chain: UV DNA damage endonuclease (320 aa).

This sequence belongs to the uve1/UvsE family.

Component in a DNA repair pathway. Removal of UV LIGHT damaged nucleotides. Recognizes pyrimidine dimers and cleave a phosphodiester bond immediately 5' to the lesion. This is UV DNA damage endonuclease from Bacillus pumilus (strain SAFR-032).